The primary structure comprises 504 residues: Probable cytosol aminopeptidase (504 aa).

The Mn(2+) site is built by Lys-268 and Asp-273. Lys-280 is a catalytic residue. Mn(2+) is bound by residues Asp-291, Asp-350, and Glu-352. Arg-354 is a catalytic residue.

The protein belongs to the peptidase M17 family. Mn(2+) is required as a cofactor.

Its subcellular location is the cytoplasm. The catalysed reaction is Release of an N-terminal amino acid, Xaa-|-Yaa-, in which Xaa is preferably Leu, but may be other amino acids including Pro although not Arg or Lys, and Yaa may be Pro. Amino acid amides and methyl esters are also readily hydrolyzed, but rates on arylamides are exceedingly low.. The enzyme catalyses Release of an N-terminal amino acid, preferentially leucine, but not glutamic or aspartic acids.. Presumably involved in the processing and regular turnover of intracellular proteins. Catalyzes the removal of unsubstituted N-terminal amino acids from various peptides. The protein is Probable cytosol aminopeptidase of Psychromonas ingrahamii (strain DSM 17664 / CCUG 51855 / 37).